We begin with the raw amino-acid sequence, 963 residues long: TBC1 domain family member 2B (963 aa).

The segment at 1-30 (MPGAGARAEEGGGGGEGAAQGAAAEPGAGP) is disordered. The segment covering 19–30 (AQGAAAEPGAGP) has biased composition (low complexity). The 106-residue stretch at 34–139 (PARLCGYLQK…WLQELQQKRW (106 aa)) folds into the PH domain. Phosphoserine is present on residues Ser-155 and Ser-317. The segment at 272 to 348 (EKKKLTPEGN…EMQLQVQSQQ (77 aa)) is disordered. Residues 318-348 (GDPSSEGTSGSGSVSIRKPASEMQLQVQSQQ) are compositionally biased toward low complexity. The stretch at 337 to 535 (ASEMQLQVQS…AKYSSLEAKL (199 aa)) forms a coiled coil. The residue at position 473 (Ser-473) is a Phosphoserine. The Rab-GAP TBC domain maps to 662–856 (GIPHEHRSKV…KIWDSFLYEG (195 aa)). Ser-957 bears the Phosphoserine mark.

It localises to the early endosome. Functionally, GTPase-activating protein that plays a role in the early steps of endocytosis. This chain is TBC1 domain family member 2B (TBC1D2B), found in Homo sapiens (Human).